We begin with the raw amino-acid sequence, 413 residues long: Tryptophan synthase beta chain (413 aa).

N6-(pyridoxal phosphate)lysine is present on lysine 106.

It belongs to the TrpB family. Tetramer of two alpha and two beta chains. The cofactor is pyridoxal 5'-phosphate.

The catalysed reaction is (1S,2R)-1-C-(indol-3-yl)glycerol 3-phosphate + L-serine = D-glyceraldehyde 3-phosphate + L-tryptophan + H2O. Its pathway is amino-acid biosynthesis; L-tryptophan biosynthesis; L-tryptophan from chorismate: step 5/5. Functionally, the beta subunit is responsible for the synthesis of L-tryptophan from indole and L-serine. This Methylorubrum populi (strain ATCC BAA-705 / NCIMB 13946 / BJ001) (Methylobacterium populi) protein is Tryptophan synthase beta chain.